The primary structure comprises 540 residues: Probable metabolite transport protein YFL040W (540 aa).

At 1 to 29 the chain is on the cytoplasmic side; it reads MTAMKAIVWRLPKMPKIKITKTYEVTKIT. A helical membrane pass occupies residues 30 to 50; it reads AILTLVGFIMGLEVPSLATFL. At 51-67 the chain is on the extracellular side; that stretch reads TNKTFNEYFKYPTPLQQ. A glycan (N-linked (GlcNAc...) asparagine) is linked at Asn52. A helical membrane pass occupies residues 68 to 88; sequence GLLMGSTPLGGIMGCFICCIM. At 89–101 the chain is on the cytoplasmic side; sequence NDRFSRIYQFQSG. A helical transmembrane segment spans residues 102 to 122; it reads IIIWNIVTLLNFCIWDILGLL. Residues 123 to 126 are Extracellular-facing; it reads ICRM. Residues 127 to 147 traverse the membrane as a helical segment; that stretch reads IKGMILGNFSILVASYANEVI. Over 148–158 the chain is Cytoplasmic; it reads PRGKRGSTMSY. A helical membrane pass occupies residues 159 to 179; that stretch reads IQLCLTIGILVMHYLCIALSL. Over 180–187 the chain is Extracellular; sequence WDSHFAFR. Residues 188-208 form a helical membrane-spanning segment; that stretch reads IAWCIGIIPGLLFWMASYALP. Over 209–275 the chain is Cytoplasmic; sequence ESYHWLVLHG…KKLPRGSFKP (67 aa). The helical transmembrane segment at 276–296 threads the bilayer; sequence LILGMTLQLLVQFSGINIILG. Over 297 to 313 the chain is Extracellular; the sequence is YITYICEIVGLEGNVKL. A helical membrane pass occupies residues 314-334; the sequence is FTSSIPYFINMVLSLLPITFI. At 335 to 341 the chain is on the cytoplasmic side; that stretch reads DYTSRKL. Residues 342-362 form a helical membrane-spanning segment; it reads ITLLGGFPISGLLITIGALFV. The Extracellular portion of the chain corresponds to 363–385; the sequence is KYGQDTKPIDGNRSLVWSIGENP. Asn374 is a glycosylation site (N-linked (GlcNAc...) asparagine). Residues 386-406 form a helical membrane-spanning segment; the sequence is FVGGWILTLCFLIVGIFAMSL. Residues 407 to 428 lie on the Cytoplasmic side of the membrane; that stretch reads SSIPWVYTNEMLPSRVKVKGFA. A helical membrane pass occupies residues 429–449; sequence ICVTFGWLGNFILTFLCPVMI. Residues 450–455 lie on the Extracellular side of the membrane; the sequence is ERLKGT. Residues 456 to 476 traverse the membrane as a helical segment; it reads TFIIFGSLTFLISLSVLIWFP. Residues 477 to 540 are Cytoplasmic-facing; that stretch reads ETKGMSIEDI…KLKSDEEMII (64 aa). The segment at 499–540 is disordered; sequence NLHGEKGIKTPDSNSNGGSTRSSQEGQLHKPIKLKSDEEMII. The segment covering 509–524 has biased composition (polar residues); sequence PDSNSNGGSTRSSQEG.

Belongs to the major facilitator superfamily. Sugar transporter (TC 2.A.1.1) family.

It localises to the membrane. The protein is Probable metabolite transport protein YFL040W of Saccharomyces cerevisiae (strain ATCC 204508 / S288c) (Baker's yeast).